The chain runs to 115 residues: MSGSKAKSRELARDVALQAIRTLYLAAVDAVRRGDYELARRLVAEADETRRVMRLRKPRFLRRGVCRNCSLPLVPGVTARYRLVRDGSVTRLVVTCLACGYIHRHVLVQRRRGSR.

Zn(2+) is bound by residues Cys-66, Cys-69, Cys-96, and Cys-99.

The protein belongs to the eukaryotic/archaeal RNase P protein component 4 family. Consists of a catalytic RNA component and at least 4-5 protein subunits. Requires Zn(2+) as cofactor.

The protein resides in the cytoplasm. The catalysed reaction is Endonucleolytic cleavage of RNA, removing 5'-extranucleotides from tRNA precursor.. Its function is as follows. Part of ribonuclease P, a protein complex that generates mature tRNA molecules by cleaving their 5'-ends. This is Ribonuclease P protein component 4 from Hyperthermus butylicus (strain DSM 5456 / JCM 9403 / PLM1-5).